Here is a 39-residue protein sequence, read N- to C-terminus: MSAVDFLERLIKAGVYIYVLRTKCVIAALLVKNYSIKDE.

The protein belongs to the orthopoxvirus A30.5 protein family.

This is an uncharacterized protein from Bos taurus (Bovine).